The sequence spans 602 residues: Sodium- and chloride-dependent GABA transporter 2 (602 aa).

The Cytoplasmic segment spans residues 1-40; sequence MDNRVSGTTSNGETKPVCPVMEKVEEDGTLEREQWTNKME. 3 helical membrane passes run 41-61, 68-88, and 121-141; these read FVLSVAGEIIGLGNVWRFPYL, GAFFIPYLIFLFTCGIPVFFL, and IVSLLNVYYIVVLAWALFYLF. Topologically, residues 142–206 are extracellular; that stretch reads SSFTTDLPWG…GIQHLGSLRW (65 aa). Cys153 and Cys162 are joined by a disulfide. N-linked (GlcNAc...) asparagine glycans are attached at residues Asn169, Asn173, and Asn178. 2 helical membrane-spanning segments follow: residues 207–227 and 233–253; these read ELVLCLLLAWIICYFCIWKGV and VVYFTATFPYLMLVVLLIRGV. An N-linked (GlcNAc...) asparagine glycan is attached at Asn269. Helical transmembrane passes span 282–302, 319–339, 366–386, 418–438, 453–473, 490–510, and 528–548; these read AGTQIFFSFAICLGCLTALGS, ILNSSTSFVAGFAIFSILGFM, VVMLPFSPLWACCFFFMVVLL, ILILIVSVVSFFIGLIMLTEG, GMCLLFVAIFESLCVAWVYGA, PLIKYCWLFFTPAVCLATFLF, and WWGDALGWLLALSSMVCIPAW. The Cytoplasmic portion of the chain corresponds to 549–602; sequence SIYKLRTLKGPLRERLRQLVCPAEDLPQKSQPELTSPATPMTSLLRLTELESNC. Residue Thr587 is modified to Phosphothreonine. At Ser591 the chain carries Phosphoserine.

It belongs to the sodium:neurotransmitter symporter (SNF) (TC 2.A.22) family. SLC6A13 subfamily. As to expression, brain, retina, and peripheral tissues. Expressed in hepatocytes (at protein level).

Its subcellular location is the cell membrane. The protein resides in the basolateral cell membrane. It carries out the reaction 4-aminobutanoate(out) + chloride(out) + 2 Na(+)(out) = 4-aminobutanoate(in) + chloride(in) + 2 Na(+)(in). The enzyme catalyses taurine(out) + chloride(out) + 2 Na(+)(out) = taurine(in) + chloride(in) + 2 Na(+)(in). The catalysed reaction is beta-alanine(out) + chloride(out) + 2 Na(+)(out) = beta-alanine(in) + chloride(in) + 2 Na(+)(in). It catalyses the reaction hypotaurine(out) + chloride(out) + 2 Na(+)(out) = hypotaurine(in) + chloride(in) + 2 Na(+)(in). Its activity is regulated as follows. GABA transport is inhibited by beta-alanine, L-2,4-Diaminobutyric acid, hypotaurine and nipecotic acid. Taurine transport is inhibited by hypotaurine, beta-alanine and nipecotic acid. Its function is as follows. Mediates sodium- and chloride-dependent transport of gamma-aminobutyric acid (GABA). Mediates transport of taurine and is the major taurine transporter in hepatocytes. Can also mediate transport of beta-alanine and hypotaurine. This is Sodium- and chloride-dependent GABA transporter 2 (Slc6a13) from Rattus norvegicus (Rat).